The sequence spans 124 residues: Apolipoprotein C-IV (124 aa).

Residues 1–27 form the signal peptide; it reads MSLLRCRPRDLPSVSLSVLFLVSFVAS. The N-linked (GlcNAc...) asparagine glycan is linked to Asn-107.

Belongs to the apolipoprotein C4 family. In terms of tissue distribution, expressed by the liver and secreted in plasma.

The protein resides in the secreted. Its function is as follows. May participate in lipoprotein metabolism. This chain is Apolipoprotein C-IV (Apoc4), found in Mus musculus (Mouse).